A 585-amino-acid polypeptide reads, in one-letter code: MANPFLLSLSLCLVLLYTSACLGEGLDRFNECQLDRLNALEPDNRIESEGGVTETWNSNKPELRCAGVAFEKHTIEPKGLHLPSYTNYPQIIMIVQGEGALGISVPGCTETFEEAQQSQSRQERRRGQRSQSQEQEDSHQKIRHFREGDILVIPPGTPYWTYNYGDEQLVAINLLDTTSLSNQLDPNPRRFYLAGNPEEEYPETQQQRQQRQQHQRPSGRRHGQHQKEEEQEGKNNILSGFDPQFLSQALNIDEDTVHKLQNPNERIKQIIRVEEGLGVISPKWQEQEEEEEEKEEPRQRRRRERREEREEEEKEEEDEPRESRRHRGGHEEEEVEEERGRGRGGSEWKRTTRRRHTRGDEGQEEEETTTTTEERRRRRGGRGSRQEEEEEQSPPRSRNGLEETICTAILRENIADPTRADLYNPTAGRISTANSLTLPILGWFQLSAEYVNLYRNGIYAPHWNINANSVIYVIRGRGRVQVVNSQGNSVFNDDLRRGQLLVVPQNFVVAHQAGDEGFEFIAFKTNDQATTSPLKQVFRGIPAEVLANAFRLSLNQVSELKYNGNHNPLVTPQSQSQDHNLVKVA.

Residues 1–23 (MANPFLLSLSLCLVLLYTSACLG) form the signal peptide. Disulfide bonds link Cys-32-Cys-65 and Cys-108-Cys-406. The Cupin type-1 1 domain occupies 37–258 (LNALEPDNRI…ALNIDEDTVH (222 aa)). 3 disordered regions span residues 113–147 (EEAQ…HFRE), 199–240 (EEYP…ILSG), and 283–402 (KWQE…NGLE). The segment covering 136-147 (EDSHQKIRHFRE) has biased composition (basic and acidic residues). Over residues 211–224 (RQQHQRPSGRRHGQ) the composition is skewed to basic residues. Residues 309-320 (REEEEKEEEDEP) show a composition bias toward acidic residues. Residues 338–350 (ERGRGRGGSEWKR) are compositionally biased toward basic and acidic residues. The Cupin type-1 2 domain maps to 412–558 (ENIADPTRAD…AFRLSLNQVS (147 aa)). The segment covering 565 to 579 (NHNPLVTPQSQSQDH) has biased composition (polar residues). The disordered stretch occupies residues 565–585 (NHNPLVTPQSQSQDHNLVKVA).

Belongs to the 11S seed storage protein (globulins) family. As to quaternary structure, hexamer; each subunit is composed of an acidic and a basic chain derived from a single precursor and linked by a disulfide bond. Component of globulins complexes which accumulate in seeds.

Its function is as follows. Sulfur-rich seed storage protein. This protein found in the seeds of many leguminous and non-leguminous plants is the source of sulfur-containing amino acids in seed meals. The protein is Conglutin alpha 3 of Lupinus angustifolius (Narrow-leaved blue lupine).